The sequence spans 299 residues: Taste receptor type 2 member 50 (299 aa).

A topological domain (extracellular) is located at residue Met1. A helical membrane pass occupies residues 2-22; sequence ITFLYIFFSILIMVLFVLGNF. At 23 to 55 the chain is on the cytoplasmic side; the sequence is ANGFIALVNFIDWVKRKKISSADQILTALAVSR. The chain crosses the membrane as a helical span at residues 56 to 76; the sequence is IGLLWTLLLNWYLTVLNPAFY. The Extracellular segment spans residues 77–87; the sequence is SVELRITSYNA. A helical transmembrane segment spans residues 88-108; the sequence is WVVTNHFSMWLAASLSIFYLL. At 109–126 the chain is on the cytoplasmic side; sequence KIANFSNLIFLHLKRRVR. The chain crosses the membrane as a helical span at residues 127 to 147; it reads SVILVILLGTLIFLVCHLLVA. Topologically, residues 148 to 181 are extracellular; that stretch reads NMDESMWAEEYEGNITGKMKLRNTVHLSYLTVTT. N-linked (GlcNAc...) asparagine glycosylation occurs at Asn161. Residues 182 to 202 traverse the membrane as a helical segment; that stretch reads LWSFIPFTLSLISFLMLICSL. Over 203–229 the chain is Cytoplasmic; the sequence is CKHLKKMQLHGEGSQDLSTKVHIKALQ. Residues 230–250 traverse the membrane as a helical segment; that stretch reads TLISFLLLCAIFFLFLIISVW. Over 251–259 the chain is Extracellular; it reads SPRRLRNDP. The chain crosses the membrane as a helical span at residues 260–280; it reads VVMVSKAVGNIYLAFDSFILI. Residues 281-299 lie on the Cytoplasmic side of the membrane; sequence WRTKKLKHTFLLILCQIRC.

It belongs to the G-protein coupled receptor T2R family.

Its subcellular location is the membrane. Its function is as follows. Receptor that may play a role in the perception of bitterness and is gustducin-linked. May play a role in sensing the chemical composition of the gastrointestinal content. The activity of this receptor may stimulate alpha gustducin, mediate PLC-beta-2 activation and lead to the gating of TRPM5. The protein is Taste receptor type 2 member 50 (TAS2R50) of Pan paniscus (Pygmy chimpanzee).